Consider the following 309-residue polypeptide: Zinc transporter ZIP2 (309 aa).

The Extracellular segment spans residues 1-8 (MEQLLGIK). Residues 9 to 29 (LGCLFALLALTLGCGLTPICF) traverse the membrane as a helical segment. Topologically, residues 30 to 46 (KWFQIDAARGHHRLVLR) are cytoplasmic. Residues 47–67 (LLGCISAGVFLGAGFMHMTAE) traverse the membrane as a helical segment. The Extracellular segment spans residues 68–103 (ALEEIESQIQKFMVQNRSASERNSSGDADSAHMEYP). The chain crosses the membrane as a helical span at residues 104–124 (YGELIISLGFFFVFFLESLAL). Topologically, residues 125–164 (QCCPGAAGGSTVQDEEWGGAHIFELHSHGHLPSPSKGPLR) are cytoplasmic. A helical membrane pass occupies residues 165 to 185 (ALVLLLSLSFHSVFEGLAVGL). Positions 175 and 179 each coordinate Zn(2+). Residues 186–189 (QPTV) are Extracellular-facing. Residues 190-210 (AATVQLCLAVLAHKGLVVFGV) traverse the membrane as a helical segment. A Zn(2+)-binding site is contributed by His-202. The Cytoplasmic segment spans residues 211 to 224 (GMRLVHLGTSSRWA). The chain crosses the membrane as a helical span at residues 225-245 (VFSILLLALMSPLGLAVGLAV). Residues 246 to 258 (TGGDSEGGRGLAQ) lie on the Extracellular side of the membrane. The helical transmembrane segment at 259–279 (AVLEGVAAGTFLYVTFLEILP) threads the bilayer. Glu-276 serves as a coordination point for Zn(2+). Over 280-288 (RELASPEAP) the chain is Cytoplasmic. Residues 289–309 (LAKWSCVAAGFAFMAFIALWA) traverse the membrane as a helical segment.

It belongs to the ZIP transporter (TC 2.A.5) family. Expressed only in prostate and uterine epithelial cells.

It is found in the cell membrane. It catalyses the reaction Zn(2+)(in) = Zn(2+)(out). The catalysed reaction is Cd(2+)(in) = Cd(2+)(out). With respect to regulation, activity is increased at acidic pH (6.5). Inhibited in the presence of high extracellular K(+). Functionally, transporter for the divalent cation Zn(2+). Mediates the influx of Zn(2+) into cells from extracellular space. The Zn(2+) uniporter activity is independent of H(+)-driving force, but is modulated by extracellular pH and membrane potential. Also transports other divalent cations Zn(2+), Cd2(+), Cu2(+), Co2(+) in the order of decreasing affinity, respectively. In the skin, aids in the differentiation of keratinocytes in the epidermis. The chain is Zinc transporter ZIP2 from Homo sapiens (Human).